We begin with the raw amino-acid sequence, 527 residues long: N-acetylglucosamine-1-phosphodiester alpha-N-acetylglucosaminidase (527 aa).

The N-terminal stretch at 1–25 (MASSMGRFLLFFIALRGFLLEASGD) is a signal peptide. Positions 26 to 49 (FGSGASRDDDVLLPYSRARARLAR) are cleaved as a propeptide — removed in mature form. Residues 50 to 463 (DCTRVHAGRL…SLLTRTTWLA (414 aa)) lie on the Lumenal side of the membrane. Intrachain disulfides connect Cys116-Cys149, Cys133-Cys324, Cys308-Cys315, Cys363-Cys374, and Cys381-Cys390. Residues Asn209, Asn215, and Asn297 are each glycosylated (N-linked (GlcNAc...) asparagine). In terms of domain architecture, EGF-like spans 359 to 391 (DKLDCGPANCSQHGLCTETGCRCEAGWTGSNCS). 3 N-linked (GlcNAc...) asparagine glycosylation sites follow: Asn367, Asn389, and Asn421. A helical membrane pass occupies residues 464–484 (ITLALAFLLLISTAANVSLFL). Residues 485 to 527 (GSRAARRRHLDGAYVYHPLQEVNGEHPAAEKEQLGDSSNPFKD) lie on the Cytoplasmic side of the membrane. The mediates the interaction with AP4M1 stretch occupies residues 498–505 (YVYHPLQE). The Tyrosine-based internalization motif motif lies at 500–503 (YHPL). The NPF internalization motif signature appears at 523–527 (NPFKD).

In terms of assembly, homotetramer arranged as two disulfide-linked homodimers. Interacts with AP4M1. Post-translationally, glycosylated. Contains complex N-linked oligosaccharides with appreciable amounts of sialic acid. The precursor is cleaved and activated in the trans-Golgi network by a furin endopeptidase.

The protein localises to the golgi apparatus. The protein resides in the golgi stack membrane. It localises to the trans-Golgi network. It carries out the reaction N(4)-[6-(N-acetyl-alpha-D-glucosaminyl-1-phospho)-alpha-D-mannosyl-(1-&gt;2)-alpha-D-mannosyl-(glycan)]-L-asparaginyl-[protein] + H2O = N(4)-[6-phospho-alpha-D-mannosyl-(1-&gt;2)-alpha-D-mannosyl-(glycan)]-L-asparaginyl-[protein] + N-acetyl-D-glucosamine + H(+). It participates in protein modification; protein glycosylation. In terms of biological role, catalyzes the second step in the formation of the mannose 6-phosphate targeting signal on lysosomal enzyme oligosaccharides by removing GlcNAc residues from GlcNAc-alpha-P-mannose moieties, which are formed in the first step. Also hydrolyzes UDP-GlcNAc, a sugar donor for Golgi N-acetylglucosaminyltransferases. In Bos taurus (Bovine), this protein is N-acetylglucosamine-1-phosphodiester alpha-N-acetylglucosaminidase (NAGPA).